Here is a 284-residue protein sequence, read N- to C-terminus: Nucleotide-binding protein NMC0691 (284 aa).

An ATP-binding site is contributed by 8–15 (GLSGSGKS). Residue 58–61 (DVRS) participates in GTP binding.

The protein belongs to the RapZ-like family.

Its function is as follows. Displays ATPase and GTPase activities. This is Nucleotide-binding protein NMC0691 from Neisseria meningitidis serogroup C / serotype 2a (strain ATCC 700532 / DSM 15464 / FAM18).